An 842-amino-acid chain; its full sequence is Protein translocase subunit SecA 1 (842 aa).

Residues Q85, 103-107 (GEGKT), and D493 contribute to the ATP site. Zn(2+) contacts are provided by C824, C826, C835, and H836.

It belongs to the SecA family. Monomer and homodimer. Part of the essential Sec protein translocation apparatus which comprises SecA, SecYEG and auxiliary proteins SecDF. Other proteins may also be involved. Zn(2+) serves as cofactor.

It localises to the cell membrane. The protein localises to the cytoplasm. The catalysed reaction is ATP + H2O + cellular proteinSide 1 = ADP + phosphate + cellular proteinSide 2.. In terms of biological role, part of the Sec protein translocase complex. Interacts with the SecYEG preprotein conducting channel. Has a central role in coupling the hydrolysis of ATP to the transfer of proteins into and across the cell membrane, serving as an ATP-driven molecular motor driving the stepwise translocation of polypeptide chains across the membrane. The protein is Protein translocase subunit SecA 1 of Streptococcus agalactiae serotype Ia (strain ATCC 27591 / A909 / CDC SS700).